We begin with the raw amino-acid sequence, 137 residues long: Large ribosomal subunit protein uL16 (137 aa).

This sequence belongs to the universal ribosomal protein uL16 family. As to quaternary structure, part of the 50S ribosomal subunit.

In terms of biological role, binds 23S rRNA and is also seen to make contacts with the A and possibly P site tRNAs. The chain is Large ribosomal subunit protein uL16 from Streptococcus suis (strain 98HAH33).